The primary structure comprises 457 residues: Choline kinase alpha (457 aa).

Residues 1 to 86 (MKTKFCTGGE…PPADEQPEPR (86 aa)) form a disordered region. Positions 13–32 (PSPLGLLLSCGSGSAAPAPG) are enriched in low complexity. Residues 55–80 (LALPPPPPLPLPLPLPQPPPPQPPAD) are compositionally biased toward pro residues. Residues 117 to 123 (RGGLSNM), arginine 146, and 207 to 213 (QFIPSRR) contribute to the ATP site. Residue 119 to 121 (GLS) coordinates phosphocholine. Lysine 247 carries the post-translational modification N6-acetyllysine. Serine 279 carries the post-translational modification Phosphoserine. 2 residues coordinate ATP: glutamine 308 and aspartate 330.

Belongs to the choline/ethanolamine kinase family. Homodimer. Heterodimer with CHKB. As to quaternary structure, monomer; acetylation by KAT5 promotes dissociation of the homodimer and monomerization. In terms of assembly, (Microbial infection) Interacts with PI4KA/PI4KIIIalpha; CHKA bridges PI4KA/PI4KIIIalpha and hepatitis C virus (HCV) non-structural protein 5A (NS5A) and potentiates NS5A-stimulated PI4KA activity, which then facilitates the targeting of the ternary complex to the ER for viral replication. In terms of processing, phosphorylated at Ser-279 by AMPK in response to glucose deprivation, leading to localization to lipid droplets. Acetylated by KAT5 at Lys-247 following phosphorylation by AMPK, leading to monomerization and conversion into a tyrosine-protein kinase.

The protein resides in the cytoplasm. It is found in the cytosol. Its subcellular location is the lipid droplet. The catalysed reaction is choline + ATP = phosphocholine + ADP + H(+). It carries out the reaction ethanolamine + ATP = phosphoethanolamine + ADP + H(+). The enzyme catalyses L-tyrosyl-[protein] + ATP = O-phospho-L-tyrosyl-[protein] + ADP + H(+). The protein operates within phospholipid metabolism; phosphatidylcholine biosynthesis; phosphocholine from choline: step 1/1. It functions in the pathway phospholipid metabolism; phosphatidylethanolamine biosynthesis; phosphatidylethanolamine from ethanolamine: step 1/3. Its activity is regulated as follows. Homodimerization or heterodimerization is required for the choline and ethanolamine kinase activities. Functionally, plays a key role in phospholipid biosynthesis by catalyzing the phosphorylation of free choline to phosphocholine, the first step in phosphatidylcholine biosynthesis. Also phosphorylates ethanolamine, thereby contributing to phosphatidylethanolamine biosynthesis. Has higher activity with choline. May contribute to tumor cell growth. This isoform plays a key role in lipolysis of lipid droplets following glucose deprivation. In response to glucose deprivation, phosphorylated by AMPK, promoting localization to lipid droplets. Phosphorylation is followed by acetylation by KAT5, leading to dissociation of the homodimer into a monomer. Monomeric CHKA isoform 1 is converted into a tyrosine-protein kinase, which phosphorylates lipid droplet structural proteins PLIN2 and PLIN3, leading to lipolysis of lipid droplets. The polypeptide is Choline kinase alpha (CHKA) (Homo sapiens (Human)).